The chain runs to 185 residues: Putative manganese efflux pump MntP (185 aa).

The next 6 membrane-spanning stretches (helical) occupy residues 8–28 (LFVI…SIGL), 42–62 (ISFG…GVLF), 66–86 (ILVI…ILML), 103–123 (MYFI…FTVL), 137–157 (IFIG…SGYL), and 165–185 (KYAN…MIFM).

Belongs to the MntP (TC 9.B.29) family.

It localises to the cell membrane. Probably functions as a manganese efflux pump. The chain is Putative manganese efflux pump MntP from Clostridium novyi (strain NT).